The primary structure comprises 62 residues: Conotoxin TsMLCL-02 (62 aa).

Residues 1-19 (MLCLPVFIILLLLASPAAP) form the signal peptide. A propeptide spanning residues 20–54 (NPLERRIQSDLIRAALEDADMKTEKGILSSIMGTL) is cleaved from the precursor.

The protein belongs to the conotoxin T superfamily. In terms of tissue distribution, expressed by the venom duct.

It localises to the secreted. The polypeptide is Conotoxin TsMLCL-02 (Conus tessulatus (Tessellate cone)).